Here is a 303-residue protein sequence, read N- to C-terminus: MGRPLLLPLLPLLLPPAFLQPSGSTGSGPSYLYGVTQPKHLSASMGGSVEIPFSFYYPWELATAPDVRISWRRGHFHRQSFYSTRPPSIHKDYVNRLFLNWTEGQKSGFLRISNLQKQDQSVYFCRVELDTRSSGRQQWQSIEGTKLSITQAVTTTTQRPSSMTTTWRLSSTTTTTGLRVTQGKRRSDSWHISLETAVGVAVAVTVLGIMILGLICLLRWRRRKGQQRTKATTPAREPFQNTEEPYENIRNEGQNTDPKLNPKDDGIVYASLALSSSTSPRAPPSHRPLKSPQNETLYSVLKA.

The signal sequence occupies residues 1-19 (MGRPLLLPLLPLLLPPAFL). Topologically, residues 20-197 (QPSGSTGSGP…DSWHISLETA (178 aa)) are extracellular. Residues 32–150 (LYGVTQPKHL…SIEGTKLSIT (119 aa)) enclose the Ig-like V-type domain. Asn-100 carries N-linked (GlcNAc...) asparagine glycosylation. A helical transmembrane segment spans residues 198 to 218 (VGVAVAVTVLGIMILGLICLL). Topologically, residues 219 to 303 (RWRRRKGQQR…NETLYSVLKA (85 aa)) are cytoplasmic. Residues 226-296 (QQRTKATTPA…RPLKSPQNET (71 aa)) are disordered. 2 short sequence motifs (ITIM motif) span residues 267–272 (IVYASL) and 296–301 (TLYSVL).

As to quaternary structure, monomer. Interacts with PTPN6/SHP-1 and PTPN11/SHP-2 upon tyrosine phosphorylation. In terms of assembly, (Microbial infection) Interacts with herpes simplex virus 1 glycoprotein B. In terms of processing, according to PubMed:10660620, N- and O-glycosylated. According to PubMed:10903717, only N-glycosylated. Phosphorylated on tyrosine residues. In terms of tissue distribution, predominantly detected in hemopoietic tissues and is expressed by monocytes, macrophages, and granulocytes, but not by lymphocytes. Also strongly expressed by dendritic cells (DC); preferentially by CD14+/CD1a- DC derived from CD34+ progenitors. Also expressed by CD11c+ blood and tonsil DC, but not by CD11c- DC precursors.

Its subcellular location is the cell membrane. The protein resides in the secreted. Paired receptors consist of highly related activating and inhibitory receptors and are widely involved in the regulation of the immune system. PILRA is thought to act as a cellular signaling inhibitory receptor by recruiting cytoplasmic phosphatases like PTPN6/SHP-1 and PTPN11/SHP-2 via their SH2 domains that block signal transduction through dephosphorylation of signaling molecules. Receptor for PIANP. Functionally, (Microbial infection) Acts as an entry co-receptor for herpes simplex virus 1. This Homo sapiens (Human) protein is Paired immunoglobulin-like type 2 receptor alpha (PILRA).